The primary structure comprises 491 residues: Probable glycine dehydrogenase (decarboxylating) subunit 2 (491 aa).

The residue at position 273 (K273) is an N6-(pyridoxal phosphate)lysine.

The protein belongs to the GcvP family. C-terminal subunit subfamily. The glycine cleavage system is composed of four proteins: P, T, L and H. In this organism, the P 'protein' is a heterodimer of two subunits. Pyridoxal 5'-phosphate serves as cofactor.

The catalysed reaction is N(6)-[(R)-lipoyl]-L-lysyl-[glycine-cleavage complex H protein] + glycine + H(+) = N(6)-[(R)-S(8)-aminomethyldihydrolipoyl]-L-lysyl-[glycine-cleavage complex H protein] + CO2. In terms of biological role, the glycine cleavage system catalyzes the degradation of glycine. The P protein binds the alpha-amino group of glycine through its pyridoxal phosphate cofactor; CO(2) is released and the remaining methylamine moiety is then transferred to the lipoamide cofactor of the H protein. The chain is Probable glycine dehydrogenase (decarboxylating) subunit 2 from Bacillus cereus (strain B4264).